Consider the following 423-residue polypeptide: Aspartate aminotransferase, mitochondrial (423 aa).

Residues 1–22 constitute a mitochondrion transit peptide; sequence MALLQSRLLLSAPRRAAATARA. The substrate site is built by Gly58, Trp155, and Asn208. The residue at position 272 (Lys272) is an N6-(pyridoxal phosphate)lysine. Arg400 is a binding site for substrate.

This sequence belongs to the class-I pyridoxal-phosphate-dependent aminotransferase family. As to quaternary structure, homodimer. The cofactor is pyridoxal 5'-phosphate. As to expression, detected in heart (at protein level).

The protein resides in the mitochondrion matrix. The catalysed reaction is L-aspartate + 2-oxoglutarate = oxaloacetate + L-glutamate. It catalyses the reaction L-kynurenine + 2-oxoglutarate = kynurenate + L-glutamate + H2O. Its function is as follows. Catalyzes the irreversible transamination of the L-tryptophan metabolite L-kynurenine to form kynurenic acid (KA). As a member of the malate-aspartate shuttle, it has a key role in the intracellular NAD(H) redox balance. Is important for metabolite exchange between mitochondria and cytosol, and for amino acid metabolism. The polypeptide is Aspartate aminotransferase, mitochondrial (GOT2) (Gallus gallus (Chicken)).